Here is a 315-residue protein sequence, read N- to C-terminus: Ribose-phosphate pyrophosphokinase (315 aa).

Residues 37 to 39 (DGE) and 96 to 97 (RQ) contribute to the ATP site. Mg(2+) is bound by residues His-131 and Asp-170. The active site involves Lys-194. D-ribose 5-phosphate-binding positions include Arg-196, Asp-220, and 224 to 228 (DTGGT).

This sequence belongs to the ribose-phosphate pyrophosphokinase family. Class I subfamily. In terms of assembly, homohexamer. The cofactor is Mg(2+).

The protein resides in the cytoplasm. It carries out the reaction D-ribose 5-phosphate + ATP = 5-phospho-alpha-D-ribose 1-diphosphate + AMP + H(+). It participates in metabolic intermediate biosynthesis; 5-phospho-alpha-D-ribose 1-diphosphate biosynthesis; 5-phospho-alpha-D-ribose 1-diphosphate from D-ribose 5-phosphate (route I): step 1/1. Involved in the biosynthesis of the central metabolite phospho-alpha-D-ribosyl-1-pyrophosphate (PRPP) via the transfer of pyrophosphoryl group from ATP to 1-hydroxyl of ribose-5-phosphate (Rib-5-P). This chain is Ribose-phosphate pyrophosphokinase, found in Escherichia coli O6:H1 (strain CFT073 / ATCC 700928 / UPEC).